Reading from the N-terminus, the 378-residue chain is Chaperone protein DnaJ (378 aa).

A J domain is found at D5–G70. The CR-type zinc finger occupies G134–T212. Zn(2+)-binding residues include C147, C150, C164, C167, C186, C189, C200, and C203. CXXCXGXG motif repeat units lie at residues C147–G154, C164–G171, C186–G193, and C200–G207.

Belongs to the DnaJ family. In terms of assembly, homodimer. It depends on Zn(2+) as a cofactor.

Its subcellular location is the cytoplasm. Participates actively in the response to hyperosmotic and heat shock by preventing the aggregation of stress-denatured proteins and by disaggregating proteins, also in an autonomous, DnaK-independent fashion. Unfolded proteins bind initially to DnaJ; upon interaction with the DnaJ-bound protein, DnaK hydrolyzes its bound ATP, resulting in the formation of a stable complex. GrpE releases ADP from DnaK; ATP binding to DnaK triggers the release of the substrate protein, thus completing the reaction cycle. Several rounds of ATP-dependent interactions between DnaJ, DnaK and GrpE are required for fully efficient folding. Also involved, together with DnaK and GrpE, in the DNA replication of plasmids through activation of initiation proteins. The chain is Chaperone protein DnaJ from Colwellia psychrerythraea (strain 34H / ATCC BAA-681) (Vibrio psychroerythus).